Reading from the N-terminus, the 761-residue chain is Pleckstrin homology domain-containing family M member 3 (761 aa).

The residue at position 132 (Ser-132) is a Phosphoserine. PH domains follow at residues 211–308 and 361–456; these read NILK…EVVH and NILK…IAAN. The segment at 669–722 adopts a Phorbol-ester/DAG-type zinc-finger fold; it reads SHVYSCSLCSQKGFICEICNNGEILYPFEDISTSRCESCGAVFHSECKEKSVPC.

In terms of assembly, interacts with AKT1.

Its subcellular location is the cytoplasm. The protein localises to the golgi apparatus. It localises to the cell membrane. Functionally, involved in skeletal muscle differentiation. May act as a scaffold protein for AKT1 during muscle differentiation. The polypeptide is Pleckstrin homology domain-containing family M member 3 (Homo sapiens (Human)).